We begin with the raw amino-acid sequence, 749 residues long: Tryptophan 2-monooxygenase (749 aa).

4 residues coordinate FMN: Ser-232, Glu-252, Lys-260, and Arg-280. Arg-280 contributes to the substrate binding site.

It belongs to the tryptophan 2-monooxygenase family. FMN serves as cofactor.

It catalyses the reaction L-tryptophan + O2 = indole-3-acetamide + CO2 + H2O. Its pathway is plant hormone metabolism; auxin biosynthesis. The chain is Tryptophan 2-monooxygenase (aux1) from Rhizobium rhizogenes (Agrobacterium rhizogenes).